The following is a 426-amino-acid chain: Probable auxin efflux carrier component 9 (426 aa).

The Extracellular portion of the chain corresponds to 1-6 (MITGSE). A helical membrane pass occupies residues 7-27 (VYQVVEAMAPLYTAAALGYGS). At 28–38 (VRWLKAFSNEQ) the chain is on the cytoplasmic side. Residues 39–59 (CAGINHFVALYAVPVLIFDMV) form a helical membrane-spanning segment. Valine 51 serves as a coordination point for (indol-3-yl)acetate. Over 60-70 (STNNVYKMNGR) the chain is Extracellular. Residues 71 to 91 (LIAADTLQKAVLLLGLMAWAL) traverse the membrane as a helical segment. Residues 92-114 (WERSRARGAGAKAKAAVSSPLQW) are Cytoplasmic-facing. The chain crosses the membrane as a helical span at residues 115–135 (VITCFSVASLPNTIIMGVPLL). (indol-3-yl)acetate-binding residues include asparagine 126 and isoleucine 128. Residues 136-145 (NGMYGPVSKD) lie on the Extracellular side of the membrane. Residues 146 to 166 (LMKQIVVMQFCIWYNVIIFLY) form a helical membrane-spanning segment. Residue tyrosine 159 coordinates (indol-3-yl)acetate. Residues 167-286 (EYMAARRSAS…LLQIPNTYAS (120 aa)) are Cytoplasmic-facing. The tract at residues 232 to 258 (RDGVSGETTAAAKEVSSGEVAPVEEEE) is disordered. The helical transmembrane segment at 287-307 (FLGLIWSLIAFKCGFSMPKIV) threads the bilayer. Residues 308–310 (EDS) are Extracellular-facing. The helical transmembrane segment at 311-331 (LFTIRTTAVGLSMFSSGTFIA) threads the bilayer. The Cytoplasmic portion of the chain corresponds to 332 to 347 (RQSRFVPCGYKIASFS). The chain crosses the membrane as a helical span at residues 348–368 (MVIKFLIGPVVMLFASLVIGM). The Extracellular portion of the chain corresponds to 369–371 (HGT). A helical membrane pass occupies residues 372–392 (LLHIAVVQAALPLAVTSFVYA). Residue valine 386 participates in (indol-3-yl)acetate binding. Topologically, residues 393-405 (EEYKVHADIMSTG) are cytoplasmic. The helical transmembrane segment at 406 to 426 (VILGIFISLPVTIVYYILLGL) threads the bilayer.

It belongs to the auxin efflux carrier (TC 2.A.69.1) family. As to quaternary structure, homodimer. As to expression, expressed in roots, leaves and shoot apex. Expressed in roots, stem bases, stems, leaves and young panicles.

It localises to the membrane. May act as a component of the auxin efflux carrier. The protein is Probable auxin efflux carrier component 9 of Oryza sativa subsp. japonica (Rice).